The chain runs to 443 residues: 5-methylthioadenosine/S-adenosylhomocysteine deaminase (443 aa).

Zn(2+) is bound by residues His-74 and His-76. Positions 103 and 196 each coordinate substrate. His-223 lines the Zn(2+) pocket. Substrate-binding residues include Glu-226 and Asp-311. Asp-311 lines the Zn(2+) pocket.

This sequence belongs to the metallo-dependent hydrolases superfamily. MTA/SAH deaminase family. The cofactor is Zn(2+).

It catalyses the reaction S-adenosyl-L-homocysteine + H2O + H(+) = S-inosyl-L-homocysteine + NH4(+). The enzyme catalyses S-methyl-5'-thioadenosine + H2O + H(+) = S-methyl-5'-thioinosine + NH4(+). Functionally, catalyzes the deamination of 5-methylthioadenosine and S-adenosyl-L-homocysteine into 5-methylthioinosine and S-inosyl-L-homocysteine, respectively. Is also able to deaminate adenosine. This is 5-methylthioadenosine/S-adenosylhomocysteine deaminase from Haloquadratum walsbyi (strain DSM 16790 / HBSQ001).